The following is a 213-amino-acid chain: Carboxysome shell protein CcmP (213 aa).

BMC circularly permuted domains lie at 4–106 (ELRS…RLKP) and 107–211 (KIVS…GDRS). The Probably important for pore gating motif lies at 69–70 (ER).

Belongs to the EutL/PduB family. In terms of assembly, a dimer of stacked trimers, the same faces interact.

Its subcellular location is the carboxysome. Probably part of the carboxysome shell, a polyhedral inclusion where RuBisCO (ribulose bisphosphate carboxylase, rbcL-rbcS) is sequestered. It is thought that this protein controls transport of RuBisCO reactants in and out of the carboxysome; residual densities in the 4 X-ray structures suggest that differing compounds bind in interior pockets, depending on the open or closed state of the pore. In Synechococcus elongatus (strain ATCC 33912 / PCC 7942 / FACHB-805) (Anacystis nidulans R2), this protein is Carboxysome shell protein CcmP.